Reading from the N-terminus, the 750-residue chain is Glycerophosphodiester phosphodiesterase GDPDL7 (750 aa).

A signal peptide spans M1–A17. 2 consecutive GP-PDE domains span residues P41–I339 and A355–L654. 4 N-linked (GlcNAc...) asparagine glycosylation sites follow: N134, N304, N603, and N716.

The protein belongs to the glycerophosphoryl diester phosphodiesterase family. Expressed in flowers and siliques.

It carries out the reaction a sn-glycero-3-phosphodiester + H2O = an alcohol + sn-glycerol 3-phosphate + H(+). This is Glycerophosphodiester phosphodiesterase GDPDL7 from Arabidopsis thaliana (Mouse-ear cress).